Reading from the N-terminus, the 128-residue chain is Fluoride-specific ion channel FluC (128 aa).

A run of 4 helical transmembrane segments spans residues 6–26 (LVALGGAIGSAARFTLSGLVL), 36–56 (LPTFTVNIIGCLVIGMLAGLA), 68–88 (VLLFTGLVGGFTTFSAFGLET), and 99–119 (IAAAYIVSSIVVGLVLMWLGF). The Na(+) site is built by G76 and T79.

It belongs to the fluoride channel Fluc/FEX (TC 1.A.43) family.

The protein localises to the cell inner membrane. It catalyses the reaction fluoride(in) = fluoride(out). Na(+) is not transported, but it plays an essential structural role and its presence is essential for fluoride channel function. Its function is as follows. Fluoride-specific ion channel. Important for reducing fluoride concentration in the cell, thus reducing its toxicity. The chain is Fluoride-specific ion channel FluC from Methylobacillus flagellatus (strain ATCC 51484 / DSM 6875 / VKM B-1610 / KT).